Reading from the N-terminus, the 358-residue chain is Peptide chain release factor 1 (358 aa).

Position 237 is an N5-methylglutamine (glutamine 237).

Belongs to the prokaryotic/mitochondrial release factor family. In terms of processing, methylated by PrmC. Methylation increases the termination efficiency of RF1.

It is found in the cytoplasm. Functionally, peptide chain release factor 1 directs the termination of translation in response to the peptide chain termination codons UAG and UAA. The chain is Peptide chain release factor 1 from Streptomyces coelicolor (strain ATCC BAA-471 / A3(2) / M145).